We begin with the raw amino-acid sequence, 277 residues long: Ras suppressor protein 1 (277 aa).

The disordered stretch occupies residues M1–S23. Residue S2 is modified to N-acetylserine. Basic and acidic residues predominate over residues K7–S23. LRR repeat units lie at residues H41–K63, N64–L85, K87–P109, A110–L133, T135–L156, K158–L179, and Q181–L202. A disordered region spans residues M250–K277. Positions P256–K265 are enriched in basic and acidic residues.

Potentially plays a role in the Ras signal transduction pathway. Capable of suppressing v-Ras transformation in vitro. The sequence is that of Ras suppressor protein 1 (RSU1) from Bos taurus (Bovine).